The following is an 89-amino-acid chain: Small ribosomal subunit protein uS17 (89 aa).

The protein belongs to the universal ribosomal protein uS17 family. Part of the 30S ribosomal subunit.

Functionally, one of the primary rRNA binding proteins, it binds specifically to the 5'-end of 16S ribosomal RNA. The chain is Small ribosomal subunit protein uS17 from Ralstonia nicotianae (strain ATCC BAA-1114 / GMI1000) (Ralstonia solanacearum).